The chain runs to 91 residues: MLIMILIFLIALLGLGLSQTHLLSVLLCLEMMMVSLYLGLGMVSISGLHYPLMIALVLLTFSACEASSGLALLVLISRSHGSDLLKSFNLS.

2 consecutive transmembrane segments (helical) span residues 2–22 (LIMI…QTHL) and 38–58 (LGLG…ALVL).

Belongs to the complex I subunit 4L family.

The protein resides in the mitochondrion membrane. It carries out the reaction a ubiquinone + NADH + 5 H(+)(in) = a ubiquinol + NAD(+) + 4 H(+)(out). In terms of biological role, core subunit of the mitochondrial membrane respiratory chain NADH dehydrogenase (Complex I) that is believed to belong to the minimal assembly required for catalysis. Complex I functions in the transfer of electrons from NADH to the respiratory chain. The immediate electron acceptor for the enzyme is believed to be ubiquinone. The protein is NADH-ubiquinone oxidoreductase chain 4L (ND4L) of Branchiostoma floridae (Florida lancelet).